Here is a 47-residue protein sequence, read N- to C-terminus: Large ribosomal subunit protein bL34 (47 aa).

Belongs to the bacterial ribosomal protein bL34 family.

This Mycobacteroides abscessus (strain ATCC 19977 / DSM 44196 / CCUG 20993 / CIP 104536 / JCM 13569 / NCTC 13031 / TMC 1543 / L948) (Mycobacterium abscessus) protein is Large ribosomal subunit protein bL34.